The primary structure comprises 165 residues: Putative pre-16S rRNA nuclease (165 aa).

Belongs to the YqgF nuclease family.

Its subcellular location is the cytoplasm. Its function is as follows. Could be a nuclease involved in processing of the 5'-end of pre-16S rRNA. In Sinorhizobium medicae (strain WSM419) (Ensifer medicae), this protein is Putative pre-16S rRNA nuclease.